The sequence spans 389 residues: Lipid-A-disaccharide synthase (389 aa).

Belongs to the LpxB family.

It catalyses the reaction a lipid X + a UDP-2-N,3-O-bis[(3R)-3-hydroxyacyl]-alpha-D-glucosamine = a lipid A disaccharide + UDP + H(+). It functions in the pathway bacterial outer membrane biogenesis; LPS lipid A biosynthesis. Condensation of UDP-2,3-diacylglucosamine and 2,3-diacylglucosamine-1-phosphate to form lipid A disaccharide, a precursor of lipid A, a phosphorylated glycolipid that anchors the lipopolysaccharide to the outer membrane of the cell. The protein is Lipid-A-disaccharide synthase of Verminephrobacter eiseniae (strain EF01-2).